The chain runs to 1555 residues: Phospholipid-transporting ATPase DNF1 (1555 aa).

Residues M1 to R85 form a disordered region. Topologically, residues M1–N134 are cytoplasmic. Residues W22 to L37 show a composition bias toward basic residues. Residues G72–S82 show a composition bias toward low complexity. Residues I135 to V155 traverse the membrane as a helical segment. Residue N156 is a topological domain, extracellular. A helical transmembrane segment spans residues P157–I177. The Cytoplasmic portion of the chain corresponds to E178–N491. The segment at T257–H288 is disordered. The chain crosses the membrane as a helical span at residues V492 to I512. The Extracellular segment spans residues A513–G537. The chain crosses the membrane as a helical span at residues F538–I558. Residues S559 to M1123 lie on the Cytoplasmic side of the membrane. The active-site 4-aspartylphosphate intermediate is D606. D606, K607, T608, E740, F781, S783, K786, K804, R839, T840, T919, G920, D921, R1031, and K1037 together coordinate ATP. D606 is a binding site for Mg(2+). T608 provides a ligand contact to Mg(2+). D1057 lines the Mg(2+) pocket. ATP contacts are provided by N1060 and D1061. D1061 serves as a coordination point for Mg(2+). The helical transmembrane segment at I1124 to F1144 threads the bilayer. Over E1145–Y1146 the chain is Extracellular. The helical transmembrane segment at T1147–L1167 threads the bilayer. Residues D1168–Y1200 are Cytoplasmic-facing. A helical transmembrane segment spans residues M1201–L1221. Topologically, residues T1222–R1237 are extracellular. A helical membrane pass occupies residues L1238–T1258. At Y1259–D1262 the chain is on the cytoplasmic side. Residues W1263–Y1283 form a helical membrane-spanning segment. At T1284 to E1302 the chain is on the extracellular side. The chain crosses the membrane as a helical span at residues L1303 to V1323. R1320 serves as a coordination point for a 1,2-diacyl-sn-glycero-3-phospho-L-serine. Residues K1324–M1555 are Cytoplasmic-facing. Disordered regions lie at residues V1364–R1456 and E1489–M1555. Positions A1406–Q1432 are enriched in polar residues. Basic and acidic residues-rich tracts occupy residues P1436–R1456 and K1540–M1555.

This sequence belongs to the cation transport ATPase (P-type) (TC 3.A.3) family. Type IV subfamily. In terms of assembly, component of a flippase complex consisting of DNF1 and CDC50. Interacts with CDC50; the interaction is direct. Mg(2+) serves as cofactor.

It localises to the cell membrane. The protein resides in the endosome membrane. It is found in the golgi apparatus. The protein localises to the trans-Golgi network membrane. It carries out the reaction ATP + H2O + phospholipidSide 1 = ADP + phosphate + phospholipidSide 2.. The enzyme catalyses a 1,2-diacyl-sn-glycero-3-phosphoethanolamine(out) + ATP + H2O = a 1,2-diacyl-sn-glycero-3-phosphoethanolamine(in) + ADP + phosphate + H(+). It catalyses the reaction a 1,2-diacyl-sn-glycero-3-phosphocholine(out) + ATP + H2O = a 1,2-diacyl-sn-glycero-3-phosphocholine(in) + ADP + phosphate + H(+). The catalysed reaction is a beta-D-glucosyl-(1&lt;-&gt;1')-N-acylsphing-4-enine(out) + ATP + H2O = a beta-D-glucosyl-(1&lt;-&gt;1')-N-acylsphing-4-enine(in) + ADP + phosphate + H(+). It carries out the reaction a 1,2-diacyl-sn-glycero-3-phospho-L-serine(out) + ATP + H2O = a 1,2-diacyl-sn-glycero-3-phospho-L-serine(in) + ADP + phosphate + H(+). Its function is as follows. Catalytic component of a P4-ATPase flippase complex which catalyzes the hydrolysis of ATP coupled to the transport of phosphatidylcholine and phosphatidylserine from the lumenal to the cytosolic leaflet of membranes and ensures the maintenance of asymmetric distribution of phospholipids. May also transport glucosylceramide and phosphatidylethanolamine. In Chaetomium thermophilum (strain DSM 1495 / CBS 144.50 / IMI 039719) (Thermochaetoides thermophila), this protein is Phospholipid-transporting ATPase DNF1.